The primary structure comprises 562 residues: Bifunctional coenzyme A synthase (562 aa).

2 positions are modified to phosphoserine: Ser-177 and Ser-182. The segment at 179–357 is phosphopantetheine adenylyltransferase; the sequence is VARSAKQPVR…HKRPELPPGC (179 aa). In terms of domain architecture, DPCK spans 359-562; that stretch reads VIGLTGISGS…KRISEAPSDP (204 aa). ATP is bound at residue 364–371; the sequence is GISGSGKS.

In the central section; belongs to the eukaryotic CoaD family. Monomer. The N-terminus is blocked.

It is found in the cytoplasm. The protein resides in the mitochondrion matrix. The catalysed reaction is (R)-4'-phosphopantetheine + ATP + H(+) = 3'-dephospho-CoA + diphosphate. It carries out the reaction 3'-dephospho-CoA + ATP = ADP + CoA + H(+). It functions in the pathway cofactor biosynthesis; coenzyme A biosynthesis; CoA from (R)-pantothenate: step 4/5. Its pathway is cofactor biosynthesis; coenzyme A biosynthesis; CoA from (R)-pantothenate: step 5/5. Functionally, bifunctional enzyme that catalyzes the fourth and fifth sequential steps of CoA biosynthetic pathway. The fourth reaction is catalyzed by the phosphopantetheine adenylyltransferase, coded by the coaD domain; the fifth reaction is catalyzed by the dephospho-CoA kinase, coded by the coaE domain. May act as a point of CoA biosynthesis regulation. The polypeptide is Bifunctional coenzyme A synthase (Sus scrofa (Pig)).